Reading from the N-terminus, the 301-residue chain is Probable alpha-L-glutamate ligase (301 aa).

Positions 104-287 (LQLLSRKGIG…IAGLIVAYME (184 aa)) constitute an ATP-grasp domain. Residues Lys141, 178-179 (EF), Asp187, and 211-213 (RSN) each bind ATP. Mg(2+) is bound by residues Asp248, Glu260, and Asn262. Residues Asp248, Glu260, and Asn262 each contribute to the Mn(2+) site.

Belongs to the RimK family. The cofactor is Mg(2+). Requires Mn(2+) as cofactor.

This is Probable alpha-L-glutamate ligase from Cellvibrio japonicus (strain Ueda107) (Pseudomonas fluorescens subsp. cellulosa).